The following is a 94-amino-acid chain: MKKIKLQELKDSEILEQLEEARKVLRTSRFQYGVARSLENPKVIHNTKKKIAKLLTIQRERQLKVNPGERKSRVLSRAKRKKKNLARLSAKVKG.

Residues 66–94 form a disordered region; it reads NPGERKSRVLSRAKRKKKNLARLSAKVKG. A compositionally biased stretch (basic residues) spans 73-94; that stretch reads RVLSRAKRKKKNLARLSAKVKG.

The protein belongs to the universal ribosomal protein uL29 family.

The chain is Large ribosomal subunit protein uL29 from Leptospira borgpetersenii serovar Hardjo-bovis (strain JB197).